Here is a 112-residue protein sequence, read N- to C-terminus: DNA-binding protein Mboo_1886 (112 aa).

Belongs to the PDCD5 family.

This chain is DNA-binding protein Mboo_1886, found in Methanoregula boonei (strain DSM 21154 / JCM 14090 / 6A8).